Here is a 264-residue protein sequence, read N- to C-terminus: Apolipoprotein A-I (264 aa).

The first 18 residues, 1–18 (MKAVVLAVAVLFLTGSQA), serve as a signal peptide directing secretion. Repeat copies occupy residues 67–88 (LNLL…EQLG) and 89–110 (SVTK…QQMN). The 10 X approximate tandem repeats stretch occupies residues 67–264 (LNLLANWNTL…DQASKQLSAQ (198 aa)). Met109 carries the methionine sulfoxide modification. A 3; half-length repeat occupies 111–121 (KDLEEVKQKVQ). A run of 5 repeats spans residues 122 to 142 (SYLD…RDKV), 144 to 165 (PLGK…EKLA), 166 to 187 (PLGQ…THLG), 188 to 208 (SYTQ…KESA), and 209 to 229 (PVSE…EKAK). A Methionine sulfoxide modification is found at Met193. The stretch at 230 to 240 (PALEDLRQGLM) is one 9; half-length repeat. Methionine sulfoxide is present on Met240. Residues 241–264 (PVMESLKASFLSSIDQASKQLSAQ) form repeat 10.

It belongs to the apolipoprotein A1/A4/E family. As to quaternary structure, homodimer. Interacts with APOA1BP and CLU. Component of a sperm activating protein complex (SPAP), consisting of APOA1, an immunoglobulin heavy chain, an immunoglobulin light chain and albumin. Interacts with NDRG1. Interacts with SCGB3A2. Interacts with NAXE and YJEFN3. Post-translationally, glycosylated. In terms of processing, palmitoylated. Phosphorylation sites are present in the extracellular medium. As to expression, major protein of plasma HDL, also found in chylomicrons.

It localises to the secreted. Its function is as follows. Participates in the reverse transport of cholesterol from tissues to the liver for excretion by promoting cholesterol efflux from tissues and by acting as a cofactor for the lecithin cholesterol acyltransferase (LCAT). As part of the SPAP complex, activates spermatozoa motility. This is Apolipoprotein A-I (Apoa1) from Heterocephalus glaber (Naked mole rat).